A 526-amino-acid polypeptide reads, in one-letter code: Plant intracellular Ras-group-related LRR protein 5 (526 aa).

LRR repeat units lie at residues 229-252 (LSSLVRLDLSENCIMVLPATIGGL), 253-275 (ISLTRLDLHSNRIGQLPESIGDL), 276-297 (LNLVNLNLSGNQLSSLPSSFNR), 298-321 (LIHLEELDLSSNSLSILPESIGSL), 323-344 (SLKKLDVETNNIEEIPHSISGC), 346-367 (SMEELRADYNRLKALPEAVGKL), 368-390 (STLEILTVRYNNIRQLPTTMSSM), 391-414 (ANLKELDVSFNELESVPESLCYAK), 416-437 (LVKLNIGNNFANLRSLPGLIGN), 438-463 (LEKLEELDMSNNQIRFLPYSFKTLSN), and 465-484 (RVLQTEQNPLEELPRDITEK). A GVYW; degenerate motif is present at residues 485-492 (GAQAVVQY).

The protein belongs to the SHOC2 family. Widely expressed but preferentially in roots.

In terms of biological role, leucine-rich repeat protein that likely mediates protein interactions, possibly in the context of signal transduction. The protein is Plant intracellular Ras-group-related LRR protein 5 (PIRL5) of Arabidopsis thaliana (Mouse-ear cress).